The following is a 302-amino-acid chain: Glycine--tRNA ligase alpha subunit (302 aa).

The protein belongs to the class-II aminoacyl-tRNA synthetase family. As to quaternary structure, tetramer of two alpha and two beta subunits.

The protein resides in the cytoplasm. It catalyses the reaction tRNA(Gly) + glycine + ATP = glycyl-tRNA(Gly) + AMP + diphosphate. The sequence is that of Glycine--tRNA ligase alpha subunit from Haemophilus ducreyi (strain 35000HP / ATCC 700724).